Consider the following 257-residue polypeptide: Thiazole synthase (257 aa).

K97 acts as the Schiff-base intermediate with DXP in catalysis. Residues G158, 184–185 (AG), and 206–207 (NT) each bind 1-deoxy-D-xylulose 5-phosphate.

The protein belongs to the ThiG family. As to quaternary structure, homotetramer. Forms heterodimers with either ThiH or ThiS.

The protein resides in the cytoplasm. The enzyme catalyses [ThiS sulfur-carrier protein]-C-terminal-Gly-aminoethanethioate + 2-iminoacetate + 1-deoxy-D-xylulose 5-phosphate = [ThiS sulfur-carrier protein]-C-terminal Gly-Gly + 2-[(2R,5Z)-2-carboxy-4-methylthiazol-5(2H)-ylidene]ethyl phosphate + 2 H2O + H(+). The protein operates within cofactor biosynthesis; thiamine diphosphate biosynthesis. Catalyzes the rearrangement of 1-deoxy-D-xylulose 5-phosphate (DXP) to produce the thiazole phosphate moiety of thiamine. Sulfur is provided by the thiocarboxylate moiety of the carrier protein ThiS. In vitro, sulfur can be provided by H(2)S. The protein is Thiazole synthase of Desulforamulus reducens (strain ATCC BAA-1160 / DSM 100696 / MI-1) (Desulfotomaculum reducens).